We begin with the raw amino-acid sequence, 320 residues long: Sliding-clamp-loader large subunit (320 aa).

ATP is bound by residues 12–15, I24, 53–58, and R205; these read EQKY and GTGKTT.

The protein belongs to the Tevenvirinae sliding-clamp-loader large subunit family. As to quaternary structure, the sliding-clamp-loader consists of 4 large subunits and 1 small subunit. Interacts with the sliding clamp; this interaction allows the sliding-clamp-loader to open the sliding clamp. Part of the replicase complex that includes the DNA polymerase, the polymerase clamp, the clamp loader complex, the single-stranded DNA binding protein, the primase, the helicase and the helicase assembly factor.

Forms the sliding-clamp-loader together with the small subunit. Functions as an ATPase enzyme. The clamp loader holds the clamp in an open conformation and places it onto the DNA. 4 ATP molecules must bind to the sliding-clamp-loader before the latter can open the sliding clamp. ATP hydrolysis triggers the detachment of the sliding clamp from the sliding-clamp-loader, freeing the sliding clamp to track along DNA. In Escherichia phage RB69 (Bacteriophage RB69), this protein is Sliding-clamp-loader large subunit (44).